We begin with the raw amino-acid sequence, 186 residues long: Ribosome maturation factor RimM (186 aa).

In terms of domain architecture, PRC barrel spans 93-166 (PDEYYDHQLM…RAVIDPPPGL (74 aa)). The interval 160-186 (IDPPPGLIDDRAEVDSSDTEAATEADA) is disordered. Residues 174-186 (DSSDTEAATEADA) show a composition bias toward acidic residues.

The protein belongs to the RimM family. Binds ribosomal protein uS19.

It is found in the cytoplasm. An accessory protein needed during the final step in the assembly of 30S ribosomal subunit, possibly for assembly of the head region. Essential for efficient processing of 16S rRNA. May be needed both before and after RbfA during the maturation of 16S rRNA. It has affinity for free ribosomal 30S subunits but not for 70S ribosomes. The sequence is that of Ribosome maturation factor RimM from Streptomyces avermitilis (strain ATCC 31267 / DSM 46492 / JCM 5070 / NBRC 14893 / NCIMB 12804 / NRRL 8165 / MA-4680).